The chain runs to 330 residues: Aspartate--ammonia ligase (330 aa).

The protein belongs to the class-II aminoacyl-tRNA synthetase family. AsnA subfamily.

The protein localises to the cytoplasm. It carries out the reaction L-aspartate + NH4(+) + ATP = L-asparagine + AMP + diphosphate + H(+). Its pathway is amino-acid biosynthesis; L-asparagine biosynthesis; L-asparagine from L-aspartate (ammonia route): step 1/1. The sequence is that of Aspartate--ammonia ligase from Streptococcus equi subsp. equi (strain 4047).